The chain runs to 202 residues: 3-isopropylmalate dehydratase small subunit (202 aa).

The protein belongs to the LeuD family. LeuD type 1 subfamily. Heterodimer of LeuC and LeuD.

It carries out the reaction (2R,3S)-3-isopropylmalate = (2S)-2-isopropylmalate. It functions in the pathway amino-acid biosynthesis; L-leucine biosynthesis; L-leucine from 3-methyl-2-oxobutanoate: step 2/4. In terms of biological role, catalyzes the isomerization between 2-isopropylmalate and 3-isopropylmalate, via the formation of 2-isopropylmaleate. This Nocardia farcinica (strain IFM 10152) protein is 3-isopropylmalate dehydratase small subunit.